We begin with the raw amino-acid sequence, 204 residues long: GTP cyclohydrolase 1 (204 aa).

Residues C92, H95, and C165 each contribute to the Zn(2+) site.

This sequence belongs to the GTP cyclohydrolase I family. Homomer.

It carries out the reaction GTP + H2O = 7,8-dihydroneopterin 3'-triphosphate + formate + H(+). Its pathway is cofactor biosynthesis; 7,8-dihydroneopterin triphosphate biosynthesis; 7,8-dihydroneopterin triphosphate from GTP: step 1/1. This chain is GTP cyclohydrolase 1, found in Mycolicibacterium paratuberculosis (strain ATCC BAA-968 / K-10) (Mycobacterium paratuberculosis).